We begin with the raw amino-acid sequence, 332 residues long: Beta-ketoacyl-[acyl-carrier-protein] synthase III 5 (332 aa).

Active-site residues include C111 and H253. Residues 254–258 form an ACP-binding region; sequence QANAR. N283 is an active-site residue.

It belongs to the thiolase-like superfamily. FabH family. In terms of assembly, homodimer.

It is found in the cytoplasm. It catalyses the reaction malonyl-[ACP] + acetyl-CoA + H(+) = 3-oxobutanoyl-[ACP] + CO2 + CoA. The protein operates within lipid metabolism; fatty acid biosynthesis. Catalyzes the condensation reaction of fatty acid synthesis by the addition to an acyl acceptor of two carbons from malonyl-ACP. Catalyzes the first condensation reaction which initiates fatty acid synthesis and may therefore play a role in governing the total rate of fatty acid production. Possesses both acetoacetyl-ACP synthase and acetyl transacylase activities. Its substrate specificity determines the biosynthesis of branched-chain and/or straight-chain of fatty acids. The sequence is that of Beta-ketoacyl-[acyl-carrier-protein] synthase III 5 from Streptomyces coelicolor (strain ATCC BAA-471 / A3(2) / M145).